The primary structure comprises 79 residues: Sulfur carrier protein TusA (79 aa).

Cys-17 functions as the Cysteine persulfide intermediate in the catalytic mechanism.

It belongs to the sulfur carrier protein TusA family.

It localises to the cytoplasm. Functionally, sulfur carrier protein which probably makes part of a sulfur-relay system. The protein is Sulfur carrier protein TusA of Haemophilus influenzae (strain ATCC 51907 / DSM 11121 / KW20 / Rd).